Consider the following 89-residue polypeptide: Small ribosomal subunit protein uS15 (89 aa).

The protein belongs to the universal ribosomal protein uS15 family. In terms of assembly, part of the 30S ribosomal subunit. Forms a bridge to the 50S subunit in the 70S ribosome, contacting the 23S rRNA.

One of the primary rRNA binding proteins, it binds directly to 16S rRNA where it helps nucleate assembly of the platform of the 30S subunit by binding and bridging several RNA helices of the 16S rRNA. Its function is as follows. Forms an intersubunit bridge (bridge B4) with the 23S rRNA of the 50S subunit in the ribosome. This Sinorhizobium medicae (strain WSM419) (Ensifer medicae) protein is Small ribosomal subunit protein uS15.